The chain runs to 207 residues: ATP-dependent Clp protease proteolytic subunit (207 aa).

S111 serves as the catalytic Nucleophile. Residue H136 is part of the active site.

This sequence belongs to the peptidase S14 family. In terms of assembly, fourteen ClpP subunits assemble into 2 heptameric rings which stack back to back to give a disk-like structure with a central cavity, resembling the structure of eukaryotic proteasomes.

The protein resides in the cytoplasm. It carries out the reaction Hydrolysis of proteins to small peptides in the presence of ATP and magnesium. alpha-casein is the usual test substrate. In the absence of ATP, only oligopeptides shorter than five residues are hydrolyzed (such as succinyl-Leu-Tyr-|-NHMec, and Leu-Tyr-Leu-|-Tyr-Trp, in which cleavage of the -Tyr-|-Leu- and -Tyr-|-Trp bonds also occurs).. Cleaves peptides in various proteins in a process that requires ATP hydrolysis. Has a chymotrypsin-like activity. Plays a major role in the degradation of misfolded proteins. This Aeromonas salmonicida (strain A449) protein is ATP-dependent Clp protease proteolytic subunit.